The sequence spans 248 residues: 1-(5-phosphoribosyl)-5-[(5-phosphoribosylamino)methylideneamino] imidazole-4-carboxamide isomerase (248 aa).

Asp7 serves as the catalytic Proton acceptor. The active-site Proton donor is Asp129.

The protein belongs to the HisA/HisF family.

It is found in the cytoplasm. It catalyses the reaction 1-(5-phospho-beta-D-ribosyl)-5-[(5-phospho-beta-D-ribosylamino)methylideneamino]imidazole-4-carboxamide = 5-[(5-phospho-1-deoxy-D-ribulos-1-ylimino)methylamino]-1-(5-phospho-beta-D-ribosyl)imidazole-4-carboxamide. It participates in amino-acid biosynthesis; L-histidine biosynthesis; L-histidine from 5-phospho-alpha-D-ribose 1-diphosphate: step 4/9. This is 1-(5-phosphoribosyl)-5-[(5-phosphoribosylamino)methylideneamino] imidazole-4-carboxamide isomerase from Aeromonas salmonicida (strain A449).